The chain runs to 252 residues: Phosphate import ATP-binding protein PstB (252 aa).

The ABC transporter domain maps to 5–247; the sequence is MRGQDVKVFY…PKEQRTQDYI (243 aa). 37 to 44 is a binding site for ATP; that stretch reads GPSGCGKS.

This sequence belongs to the ABC transporter superfamily. Phosphate importer (TC 3.A.1.7) family. In terms of assembly, the complex is composed of two ATP-binding proteins (PstB), two transmembrane proteins (PstC and PstA) and a solute-binding protein (PstS).

Its subcellular location is the cell inner membrane. The enzyme catalyses phosphate(out) + ATP + H2O = ADP + 2 phosphate(in) + H(+). Part of the ABC transporter complex PstSACB involved in phosphate import. Responsible for energy coupling to the transport system. The protein is Phosphate import ATP-binding protein PstB of Bartonella henselae (strain ATCC 49882 / DSM 28221 / CCUG 30454 / Houston 1) (Rochalimaea henselae).